The following is a 356-amino-acid chain: Dihydroorotate dehydrogenase (quinone) (356 aa).

FMN is bound by residues 68 to 72 and T92; that span reads AGFDK. K72 provides a ligand contact to substrate. 117 to 121 contacts substrate; the sequence is NRMGF. FMN is bound by residues N145 and N178. N178 is a binding site for substrate. S181 serves as the catalytic Nucleophile. N183 contributes to the substrate binding site. Positions 214 and 242 each coordinate FMN. 243–244 provides a ligand contact to substrate; it reads NT. FMN-binding positions include G266, G295, and 316 to 317; that span reads YT.

Belongs to the dihydroorotate dehydrogenase family. Type 2 subfamily. Monomer. The cofactor is FMN.

The protein resides in the cell membrane. The enzyme catalyses (S)-dihydroorotate + a quinone = orotate + a quinol. The protein operates within pyrimidine metabolism; UMP biosynthesis via de novo pathway; orotate from (S)-dihydroorotate (quinone route): step 1/1. In terms of biological role, catalyzes the conversion of dihydroorotate to orotate with quinone as electron acceptor. The polypeptide is Dihydroorotate dehydrogenase (quinone) (Mycobacterium sp. (strain KMS)).